A 468-amino-acid chain; its full sequence is Tyrosine phenol-lyase (468 aa).

At K260 the chain carries N6-(pyridoxal phosphate)lysine.

It belongs to the beta-eliminating lyase family. As to quaternary structure, homotetramer. It depends on pyridoxal 5'-phosphate as a cofactor.

The catalysed reaction is L-tyrosine + H2O = phenol + pyruvate + NH4(+). The sequence is that of Tyrosine phenol-lyase from Lacrimispora saccharolytica (strain ATCC 35040 / DSM 2544 / NRCC 2533 / WM1) (Clostridium saccharolyticum).